A 124-amino-acid polypeptide reads, in one-letter code: Putative iron-sulfur cluster insertion protein ErpA (124 aa).

Cys52, Cys116, and Cys118 together coordinate iron-sulfur cluster.

It belongs to the HesB/IscA family. In terms of assembly, homodimer. Requires iron-sulfur cluster as cofactor.

In terms of biological role, required for insertion of 4Fe-4S clusters. In Delftia acidovorans (strain DSM 14801 / SPH-1), this protein is Putative iron-sulfur cluster insertion protein ErpA.